The primary structure comprises 289 residues: UPF0761 membrane protein ESA_04062 (289 aa).

Helical transmembrane passes span 44-64 (LLSL…FPMF), 104-124 (VGAL…DSAL), 140-160 (FAVY…SLVI), 183-203 (IFPL…VPTT), 215-235 (LVAA…ITMF), and 244-264 (VLAV…IVLL).

The protein belongs to the UPF0761 family.

Its subcellular location is the cell inner membrane. The protein is UPF0761 membrane protein ESA_04062 of Cronobacter sakazakii (strain ATCC BAA-894) (Enterobacter sakazakii).